A 591-amino-acid polypeptide reads, in one-letter code: Oxaloacetate decarboxylase alpha chain (591 aa).

Residues 3 to 263 (IAITDVVLRD…DTGLDILKLE (261 aa)) form the Pyruvate carboxyltransferase domain. In terms of domain architecture, Biotinyl-binding spans 518–591 (PAGAGTPVTA…SVGDTLMTLA (74 aa)). Residue K557 is modified to N6-biotinyllysine.

Composed of three chains (alpha, beta, and gamma). It depends on biotin as a cofactor.

The catalysed reaction is oxaloacetate + 2 Na(+)(in) + H(+) = pyruvate + 2 Na(+)(out) + CO2. Its function is as follows. Catalyzes the decarboxylation of oxaloacetate coupled to Na(+) translocation. The polypeptide is Oxaloacetate decarboxylase alpha chain (oadA1) (Salmonella typhimurium (strain LT2 / SGSC1412 / ATCC 700720)).